Consider the following 97-residue polypeptide: Large ribosomal subunit protein eL21 (97 aa).

The disordered stretch occupies residues 1-23 (MTKMSKGPRSGSRRVMTKSVKNK).

The protein belongs to the eukaryotic ribosomal protein eL21 family.

This chain is Large ribosomal subunit protein eL21, found in Picrophilus torridus (strain ATCC 700027 / DSM 9790 / JCM 10055 / NBRC 100828 / KAW 2/3).